Here is a 128-residue protein sequence, read N- to C-terminus: Transcription antitermination protein NusB (128 aa).

It belongs to the NusB family.

Functionally, involved in transcription antitermination. Required for transcription of ribosomal RNA (rRNA) genes. Binds specifically to the boxA antiterminator sequence of the ribosomal RNA (rrn) operons. This chain is Transcription antitermination protein NusB, found in Listeria monocytogenes serotype 4a (strain HCC23).